The following is a 1048-amino-acid chain: Selenate reductase subunit A (1048 aa).

Residues 1–39 (MENQHQKFISRRNFIKTSALLGGTAFLGTGLPNIKKTYS) constitute a signal peptide (tat-type signal). Positions 56-129 (ENILYSACLQ…AGIQHAYDPY (74 aa)) constitute a 4Fe-4S Mo/W bis-MGD-type domain. Cys-63, Cys-66, Cys-70, and Cys-115 together coordinate [4Fe-4S] cluster. Cys-270 is a Mo-bis(molybdopterin guanine dinucleotide) binding site.

It belongs to the prokaryotic molybdopterin-containing oxidoreductase family. The complex is composed of three subunits: SrdA, SrdB and SrdC. [4Fe-4S] cluster serves as cofactor. It depends on Mo-bis(molybdopterin guanine dinucleotide) as a cofactor. Predicted to be exported by the Tat system. The position of the signal peptide cleavage has not been experimentally proven.

The protein resides in the secreted. It catalyses the reaction selenite + a quinone + H2O = selenate + a quinol. Its function is as follows. Component of the respiratory selenate reductase complex, which catalyzes the reduction of selenate to selenite. SrdA is probably the catalytic subunit that reduces selenate. The protein is Selenate reductase subunit A of Mesobacillus selenatarsenatis (strain DSM 18680 / JCM 14380 / FERM P-15431 / SF-1).